The primary structure comprises 476 residues: ATP synthase subunit beta (476 aa).

ATP is bound at residue 152–159; the sequence is GGAGVGKT.

The protein belongs to the ATPase alpha/beta chains family. As to quaternary structure, F-type ATPases have 2 components, CF(1) - the catalytic core - and CF(0) - the membrane proton channel. CF(1) has five subunits: alpha(3), beta(3), gamma(1), delta(1), epsilon(1). CF(0) has three main subunits: a(1), b(2) and c(9-12). The alpha and beta chains form an alternating ring which encloses part of the gamma chain. CF(1) is attached to CF(0) by a central stalk formed by the gamma and epsilon chains, while a peripheral stalk is formed by the delta and b chains.

It is found in the cell inner membrane. The catalysed reaction is ATP + H2O + 4 H(+)(in) = ADP + phosphate + 5 H(+)(out). Functionally, produces ATP from ADP in the presence of a proton gradient across the membrane. The catalytic sites are hosted primarily by the beta subunits. This Granulibacter bethesdensis (strain ATCC BAA-1260 / CGDNIH1) protein is ATP synthase subunit beta.